We begin with the raw amino-acid sequence, 132 residues long: Large ribosomal subunit protein uL14 (132 aa).

It belongs to the universal ribosomal protein uL14 family. Part of the 50S ribosomal subunit. Forms a cluster with proteins L3 and L24e, part of which may contact the 16S rRNA in 2 intersubunit bridges.

Functionally, binds to 23S rRNA. Forms part of two intersubunit bridges in the 70S ribosome. This is Large ribosomal subunit protein uL14 from Halobacterium salinarum (strain ATCC 29341 / DSM 671 / R1).